A 124-amino-acid polypeptide reads, in one-letter code: Glycine cleavage system H protein (124 aa).

One can recognise a Lipoyl-binding domain in the interval 22-104 (LVITGITDHA…YGKGWIYKIK (83 aa)). N6-lipoyllysine is present on Lys-63.

It belongs to the GcvH family. The glycine cleavage system is composed of four proteins: P, T, L and H. The cofactor is (R)-lipoate.

Its function is as follows. The glycine cleavage system catalyzes the degradation of glycine. The H protein shuttles the methylamine group of glycine from the P protein to the T protein. In Acinetobacter baumannii (strain SDF), this protein is Glycine cleavage system H protein.